Consider the following 222-residue polypeptide: Protein GrpE (222 aa).

Residues 1-82 (MSDFNKDEYL…KADDTLTPLG (82 aa)) are disordered. Low complexity predominate over residues 20 to 71 (SGQAAPAAASADSAAAAAGATQEGAAQPAAAQSQENGDSAAADGADKAGAAD).

It belongs to the GrpE family. Homodimer.

It is found in the cytoplasm. Participates actively in the response to hyperosmotic and heat shock by preventing the aggregation of stress-denatured proteins, in association with DnaK and GrpE. It is the nucleotide exchange factor for DnaK and may function as a thermosensor. Unfolded proteins bind initially to DnaJ; upon interaction with the DnaJ-bound protein, DnaK hydrolyzes its bound ATP, resulting in the formation of a stable complex. GrpE releases ADP from DnaK; ATP binding to DnaK triggers the release of the substrate protein, thus completing the reaction cycle. Several rounds of ATP-dependent interactions between DnaJ, DnaK and GrpE are required for fully efficient folding. The sequence is that of Protein GrpE from Bifidobacterium adolescentis (strain ATCC 15703 / DSM 20083 / NCTC 11814 / E194a).